Here is a 160-residue protein sequence, read N- to C-terminus: MEKDDLTHFNDEKRAKMVDVTSKSETKRRAIASATIHMNEETLARIHAGKIAKGDVLAVAQVAGIMAAKKTSELIPMCHPIMTTKADISFEDDGKTALTITSEVVTVGKTGVEMEALTAVTIAALTIYDMCKAMDKGMRIEKTYLVEKTGGKSGTFKAEA.

Residues 77–79 and 114–115 contribute to the substrate site; these read MCH and ME. Asp-129 is a catalytic residue.

The protein belongs to the MoaC family. As to quaternary structure, homohexamer; trimer of dimers.

The enzyme catalyses (8S)-3',8-cyclo-7,8-dihydroguanosine 5'-triphosphate = cyclic pyranopterin phosphate + diphosphate. The protein operates within cofactor biosynthesis; molybdopterin biosynthesis. Its function is as follows. Catalyzes the conversion of (8S)-3',8-cyclo-7,8-dihydroguanosine 5'-triphosphate to cyclic pyranopterin monophosphate (cPMP). This Listeria monocytogenes serovar 1/2a (strain ATCC BAA-679 / EGD-e) protein is Cyclic pyranopterin monophosphate synthase.